We begin with the raw amino-acid sequence, 213 residues long: Protein-L-isoaspartate O-methyltransferase (213 aa).

The active site involves S61.

The protein belongs to the methyltransferase superfamily. L-isoaspartyl/D-aspartyl protein methyltransferase family.

The protein resides in the cytoplasm. It catalyses the reaction [protein]-L-isoaspartate + S-adenosyl-L-methionine = [protein]-L-isoaspartate alpha-methyl ester + S-adenosyl-L-homocysteine. Functionally, catalyzes the methyl esterification of L-isoaspartyl residues in peptides and proteins that result from spontaneous decomposition of normal L-aspartyl and L-asparaginyl residues. It plays a role in the repair and/or degradation of damaged proteins. In Petrotoga mobilis (strain DSM 10674 / SJ95), this protein is Protein-L-isoaspartate O-methyltransferase.